Consider the following 443-residue polypeptide: Serine/threonine-protein kinase 40 (443 aa).

Over residues 1-11 (MKRRASERDAG) the composition is skewed to basic and acidic residues. The disordered stretch occupies residues 1 to 26 (MKRRASERDAGETSARSKALCSSISG). Positions 14–26 (SARSKALCSSISG) are enriched in polar residues. A Protein kinase domain is found at 35 to 332 (FILGPRLGNS…EVLESLGAII (298 aa)). Residues 41–49 (LGNSPVPSI) and Lys66 each bind ATP. Catalysis depends on Asp197, which acts as the Proton acceptor.

It belongs to the protein kinase superfamily. CAMK Ser/Thr protein kinase family.

Its subcellular location is the nucleus. It localises to the cytoplasm. The enzyme catalyses L-seryl-[protein] + ATP = O-phospho-L-seryl-[protein] + ADP + H(+). The catalysed reaction is L-threonyl-[protein] + ATP = O-phospho-L-threonyl-[protein] + ADP + H(+). May be a negative regulator of NF-kappa-B and p53-mediated gene transcription. This is Serine/threonine-protein kinase 40 (stk40) from Xenopus tropicalis (Western clawed frog).